A 392-amino-acid chain; its full sequence is 23S rRNA (uracil(747)-C(5))-methyltransferase RlmC (392 aa).

Residues cysteine 4, cysteine 12, cysteine 15, and cysteine 93 each coordinate [4Fe-4S] cluster. Positions 218, 247, 275, and 321 each coordinate S-adenosyl-L-methionine. The active-site Nucleophile is cysteine 348.

The protein belongs to the class I-like SAM-binding methyltransferase superfamily. RNA M5U methyltransferase family. RlmC subfamily.

It catalyses the reaction uridine(747) in 23S rRNA + S-adenosyl-L-methionine = 5-methyluridine(747) in 23S rRNA + S-adenosyl-L-homocysteine + H(+). Catalyzes the formation of 5-methyl-uridine at position 747 (m5U747) in 23S rRNA. The protein is 23S rRNA (uracil(747)-C(5))-methyltransferase RlmC of Haemophilus influenzae (strain PittGG).